An 89-amino-acid chain; its full sequence is Small ribosomal subunit protein uS15 (89 aa).

The protein belongs to the universal ribosomal protein uS15 family. In terms of assembly, part of the 30S ribosomal subunit. Forms a bridge to the 50S subunit in the 70S ribosome, contacting the 23S rRNA.

One of the primary rRNA binding proteins, it binds directly to 16S rRNA where it helps nucleate assembly of the platform of the 30S subunit by binding and bridging several RNA helices of the 16S rRNA. In terms of biological role, forms an intersubunit bridge (bridge B4) with the 23S rRNA of the 50S subunit in the ribosome. The protein is Small ribosomal subunit protein uS15 of Nocardia farcinica (strain IFM 10152).